The chain runs to 315 residues: NAD-dependent protein deacylase sirtuin-5, mitochondrial (315 aa).

Residues 1-39 (MSLLHFATRRLILQVLRELGLKAPPVHKTLKICIAMSRP) constitute a mitochondrion transit peptide. The Deacetylase sirtuin-type domain occupies 40 to 312 (SSNMADFRRF…PEALSPHESE (273 aa)). 61-80 (GAGVSAESGVPTFRGPGGFW) lines the NAD(+) pocket. Substrate-binding residues include Tyr-105 and Arg-108. 143–146 (QNID) contributes to the NAD(+) binding site. His-161 serves as the catalytic Proton acceptor. Residues 254–256 (GTS), 280–282 (NTV), and Cys-298 each bind NAD(+).

This sequence belongs to the sirtuin family. Class III subfamily. As to quaternary structure, monomer. Homodimer. Interacts with CPS1.

Its subcellular location is the mitochondrion. It localises to the cytoplasm. It is found in the cytosol. The protein localises to the nucleus. It catalyses the reaction N(6)-malonyl-L-lysyl-[protein] + NAD(+) + H2O = 2''-O-malonyl-ADP-D-ribose + nicotinamide + L-lysyl-[protein]. The enzyme catalyses N(6)-succinyl-L-lysyl-[protein] + NAD(+) + H2O = 2''-O-succinyl-ADP-D-ribose + nicotinamide + L-lysyl-[protein]. The catalysed reaction is N(6)-glutaryl-L-lysyl-[protein] + NAD(+) + H2O = 2''-O-glutaryl-ADP-D-ribose + nicotinamide + L-lysyl-[protein]. NAD-dependent lysine demalonylase, desuccinylase and deglutarylase that specifically removes malonyl, succinyl and glutaryl groups on target proteins. Activates CPS1 and contributes to the regulation of blood ammonia levels during prolonged fasting: acts by mediating desuccinylation and deglutarylation of CPS1, thereby increasing CPS1 activity in response to elevated NAD levels during fasting. Activates SOD1 by mediating its desuccinylation, leading to reduced reactive oxygen species. Activates SHMT2 by mediating its desuccinylation. Modulates ketogenesis through the desuccinylation and activation of HMGCS2. Has weak NAD-dependent protein deacetylase activity; however this activity may not be physiologically relevant in vivo. Can deacetylate cytochrome c (CYCS) and a number of other proteins in vitro such as UOX. In Monodelphis domestica (Gray short-tailed opossum), this protein is NAD-dependent protein deacylase sirtuin-5, mitochondrial.